The chain runs to 689 residues: tRNA wybutosine-synthesizing protein 4 (689 aa).

The tract at residues 1–33 (MTSTSKLDANQLARQRKKLEKDRRKKVYDDQQV) is disordered. Over residues 14 to 26 (RQRKKLEKDRRKK) the composition is skewed to basic residues. Residues Arg84, Gly111, Asp137, 183 to 184 (DL), and Glu215 each bind S-adenosyl-L-methionine.

It belongs to the methyltransferase superfamily. LCMT family.

The catalysed reaction is 7-[(3S)-3-amino-3-carboxypropyl]wyosine(37) in tRNA(Phe) + S-adenosyl-L-methionine = 7-[(3S)-(3-amino-3-methoxycarbonyl)propyl]wyosine(37) in tRNA(Phe) + S-adenosyl-L-homocysteine. The enzyme catalyses 7-[(3S)-(3-amino-3-methoxycarbonyl)propyl]wyosine(37) in tRNA(Phe) + S-adenosyl-L-methionine + CO2 = wybutosine(37) in tRNA(Phe) + S-adenosyl-L-homocysteine + 2 H(+). It participates in tRNA modification; wybutosine-tRNA(Phe) biosynthesis. Functionally, probable S-adenosyl-L-methionine-dependent methyltransferase that acts as a component of the wybutosine biosynthesis pathway. Wybutosine is a hyper modified guanosine with a tricyclic base found at the 3'-position adjacent to the anticodon of eukaryotic phenylalanine tRNA. May methylate the carboxyl group of leucine residues to form alpha-leucine ester residues. In Candida albicans (strain SC5314 / ATCC MYA-2876) (Yeast), this protein is tRNA wybutosine-synthesizing protein 4 (PPM2).